A 969-amino-acid chain; its full sequence is MTFALGQRWISDTESDLGLGTVVAMDARTVTVMFAASEENRVYARTDAPVTRVAFNVGDVIECQEGWSLSVEEVIEDKGLLTYLGTREDTQETEVTLREIFLSNQIRFNKPQDKLYAGQIDRMDNFVLRYRALSNQYQQHKSPMRGLCGMRAGLIPHQLYIAHEVGRRHAPRVLLADEVGLGKTIEAGMIIHQQVLSGRAERILIVVPETLQHQWLVEMMRRFNLHFSIFDEERCIESFAESDNPFDTQQYVLCSLDFLRKSRKRYEQALEGEWDLLVVDEAHHLEWSQDKPSREYQVVEGLAENTSGVLLLTATPEQLGRESHFARLRLLDPDRFYDYEAFVEEEDQYAPVADAVTALFSGVKLENSAKNQITELLSEQDVEPLFRVIEGDSSEEEQALARQELIDNLMDRHGTGRVLFRNTRAAIKGFPKRNVNLLPMDIPTQYTTSMRVSGMIGGKMAPEARAMKMLYPEEIFQEFEGEDSSWWQFDSRVNWLIEKIQDKRSEKILVIASRASTALQLEQALREREGVRATVFHEGMSILERDKAAAYFAQEEGGAQVLICSEIGSEGRNFQFANQLVMFDLPFNPDLLEQRIGRLDRIGQLRDIDIHVPYLKGTSQAILARWFDEGLNAFAETCPTGRTVYDKYSDVLIEMLASGNTEQLDEVIEESAKLNQSLKSDLEKGRDRLLEMHSNGGDKAHEIAEKIASTDGDTNLVTFALSLFDTIGLNQDDKGENALVVTPSEHMMVPSYPGLPYEGATITFDRETALSREDMNFISWEHPMIQGGIDLLLSEGVGASAVSLLKNKALPVGTILLELVYLVDAQAPKRSGISQFLPKTPIRLMMDGRGNDLSAQVEFDSFNRQLSPVNRHLASKLVNSVQGEIHKLIEAGETHVLPKVEEVRQQAQKDMQTNLNGELERLQALKAVNPNIRDEELEVIEAQINELTGYISKAQVQLDSLRLIVVSHN.

Positions 164 to 334 constitute a Helicase ATP-binding domain; the sequence is EVGRRHAPRV…FARLRLLDPD (171 aa). ATP is bound at residue 177-184; that stretch reads DEVGLGKT. The short motif at 280 to 283 is the DEAH box element; it reads DEAH. Residues 492-679 enclose the Helicase C-terminal domain; sequence RVNWLIEKIQ…ESAKLNQSLK (188 aa).

It belongs to the SNF2/RAD54 helicase family. RapA subfamily. In terms of assembly, interacts with the RNAP. Has a higher affinity for the core RNAP than for the holoenzyme. Its ATPase activity is stimulated by binding to RNAP.

Functionally, transcription regulator that activates transcription by stimulating RNA polymerase (RNAP) recycling in case of stress conditions such as supercoiled DNA or high salt concentrations. Probably acts by releasing the RNAP, when it is trapped or immobilized on tightly supercoiled DNA. Does not activate transcription on linear DNA. Probably not involved in DNA repair. In Vibrio atlanticus (strain LGP32) (Vibrio splendidus (strain Mel32)), this protein is RNA polymerase-associated protein RapA.